The primary structure comprises 217 residues: Imidazole glycerol phosphate synthase subunit HisH (217 aa).

One can recognise a Glutamine amidotransferase type-1 domain in the interval 3–217; sequence SVAVIDYGMG…FLRWEPWSSR (215 aa). The active-site Nucleophile is Cys82. Residues His193 and Glu195 contribute to the active site.

Heterodimer of HisH and HisF.

The protein localises to the cytoplasm. The enzyme catalyses 5-[(5-phospho-1-deoxy-D-ribulos-1-ylimino)methylamino]-1-(5-phospho-beta-D-ribosyl)imidazole-4-carboxamide + L-glutamine = D-erythro-1-(imidazol-4-yl)glycerol 3-phosphate + 5-amino-1-(5-phospho-beta-D-ribosyl)imidazole-4-carboxamide + L-glutamate + H(+). It catalyses the reaction L-glutamine + H2O = L-glutamate + NH4(+). It participates in amino-acid biosynthesis; L-histidine biosynthesis; L-histidine from 5-phospho-alpha-D-ribose 1-diphosphate: step 5/9. Functionally, IGPS catalyzes the conversion of PRFAR and glutamine to IGP, AICAR and glutamate. The HisH subunit catalyzes the hydrolysis of glutamine to glutamate and ammonia as part of the synthesis of IGP and AICAR. The resulting ammonia molecule is channeled to the active site of HisF. In Methylococcus capsulatus (strain ATCC 33009 / NCIMB 11132 / Bath), this protein is Imidazole glycerol phosphate synthase subunit HisH.